We begin with the raw amino-acid sequence, 32 residues long: Calcitonin (32 aa).

An intrachain disulfide couples Cys-1 to Cys-7. Pro-32 bears the Proline amide mark.

Belongs to the calcitonin family.

The protein localises to the secreted. Causes a rapid but short-lived drop in the level of calcium and phosphate in blood by promoting the incorporation of those ions in the bones. The sequence is that of Calcitonin from Anguilla japonica (Japanese eel).